Consider the following 383-residue polypeptide: Transposase InsI for insertion sequence element IS30C (383 aa).

One can recognise an Integrase catalytic domain in the interval 213–379 (VNGTPIHERS…TPKEIIERGV (167 aa)).

It belongs to the transposase IS30 family.

In terms of biological role, required for the transposition of the insertion element. The chain is Transposase InsI for insertion sequence element IS30C (insI3) from Escherichia coli (strain K12).